A 463-amino-acid chain; its full sequence is ATP synthase subunit beta (463 aa).

Residue glycine 152–threonine 159 coordinates ATP.

Belongs to the ATPase alpha/beta chains family. As to quaternary structure, F-type ATPases have 2 components, CF(1) - the catalytic core - and CF(0) - the membrane proton channel. CF(1) has five subunits: alpha(3), beta(3), gamma(1), delta(1), epsilon(1). CF(0) has three main subunits: a(1), b(2) and c(9-12). The alpha and beta chains form an alternating ring which encloses part of the gamma chain. CF(1) is attached to CF(0) by a central stalk formed by the gamma and epsilon chains, while a peripheral stalk is formed by the delta and b chains.

It is found in the cell inner membrane. It carries out the reaction ATP + H2O + 4 H(+)(in) = ADP + phosphate + 5 H(+)(out). Functionally, produces ATP from ADP in the presence of a proton gradient across the membrane. The catalytic sites are hosted primarily by the beta subunits. This chain is ATP synthase subunit beta, found in Shewanella denitrificans (strain OS217 / ATCC BAA-1090 / DSM 15013).